The primary structure comprises 515 residues: Fatty acyl-CoA reductase 2 (515 aa).

Over 1-465 (MSMIAAFYGG…AKQHLKRLRN (465 aa)) the chain is Cytoplasmic. Residues 466 to 484 (IHYLFNTALFLIAWRLLIA) traverse the membrane as a helical segment. Over 485 to 515 (RSQVARNVWFFIVSFCYKFLSYFRASSTLNV) the chain is Peroxisomal.

Belongs to the fatty acyl-CoA reductase family.

It localises to the peroxisome membrane. It catalyses the reaction a long-chain fatty acyl-CoA + 2 NADPH + 2 H(+) = a long-chain primary fatty alcohol + 2 NADP(+) + CoA. The catalysed reaction is hexadecanoyl-CoA + 2 NADPH + 2 H(+) = hexadecan-1-ol + 2 NADP(+) + CoA. It carries out the reaction octadecanoyl-CoA + 2 NADPH + 2 H(+) = octadecan-1-ol + 2 NADP(+) + CoA. The enzyme catalyses a very long-chain fatty acyl-CoA + 2 NADPH + 2 H(+) = a very long-chain primary fatty alcohol + 2 NADP(+) + CoA. It catalyses the reaction an ultra-long-chain fatty acyl-CoA + 2 NADPH + 2 H(+) = an ultra long-chain primary fatty alcohol + 2 NADP(+) + CoA. The catalysed reaction is eicosanoyl-CoA + 2 NADPH + 2 H(+) = eicosan-1-ol + 2 NADP(+) + CoA. It carries out the reaction docosanoyl-CoA + 2 NADPH + 2 H(+) = docosan-1-ol + 2 NADP(+) + CoA. The enzyme catalyses tetracosanoyl-CoA + 2 NADPH + 2 H(+) = tetracosan-1-ol + 2 NADP(+) + CoA. It catalyses the reaction hexacosanoyl-CoA + 2 NADPH + 2 H(+) = hexacosan-1-ol + 2 NADP(+) + CoA. The catalysed reaction is octacosanoyl-CoA + 2 NADPH + 2 H(+) = octacosan-1-ol + 2 NADP(+) + CoA. It carries out the reaction triacontanoyl-CoA + 2 NADPH + 2 H(+) = triacontan-1-ol + 2 NADP(+) + CoA. The enzyme catalyses 18-methylnonadecanoyl-CoA + 2 NADPH + 2 H(+) = 18-methylnonadecan-1-ol + 2 NADP(+) + CoA. It catalyses the reaction 20-methylheneicosanoyl-CoA + 2 NADPH + 2 H(+) = 20-methylheneicosan-1-ol + 2 NADP(+) + CoA. The catalysed reaction is 22-methyltricosanoyl-CoA + 2 NADPH + 2 H(+) = 22-methyltricosan-1-ol + 2 NADP(+) + CoA. It carries out the reaction 24-methylpentacosanoyl-CoA + 2 NADPH + 2 H(+) = 24-methylpentacosan-1-ol + 2 NADP(+) + CoA. Its function is as follows. Catalyzes the reduction of saturated but not unsaturated C16 or C18 fatty acyl-CoA to fatty alcohols (FAls). A lower activity can be observed with shorter fatty acyl-CoA substrates. Can produce very long-chain and ultra long-chain FAls, regardless of whether they have a straight or branched chain. Involved in the production of ether lipids/plasmalogens and wax monoesters whose synthesis requires FAls as substrates. The polypeptide is Fatty acyl-CoA reductase 2 (Bos taurus (Bovine)).